The primary structure comprises 489 residues: Glutamate--tRNA ligase (489 aa).

The 'HIGH' region motif lies at 11-21 (PSPTGHLHIGN). A 'KMSKS' region motif is present at residues 252–256 (KLSKR). K255 is an ATP binding site.

It belongs to the class-I aminoacyl-tRNA synthetase family. Glutamate--tRNA ligase type 1 subfamily. In terms of assembly, monomer.

It is found in the cytoplasm. It catalyses the reaction tRNA(Glu) + L-glutamate + ATP = L-glutamyl-tRNA(Glu) + AMP + diphosphate. Its function is as follows. Catalyzes the attachment of glutamate to tRNA(Glu) in a two-step reaction: glutamate is first activated by ATP to form Glu-AMP and then transferred to the acceptor end of tRNA(Glu). The polypeptide is Glutamate--tRNA ligase (Oceanobacillus iheyensis (strain DSM 14371 / CIP 107618 / JCM 11309 / KCTC 3954 / HTE831)).